A 429-amino-acid polypeptide reads, in one-letter code: UDP-N-acetylglucosamine 1-carboxyvinyltransferase 2 (429 aa).

Residue 22–23 participates in phosphoenolpyruvate binding; that stretch reads KN. A UDP-N-acetyl-alpha-D-glucosamine-binding site is contributed by arginine 93. Cysteine 117 acts as the Proton donor in catalysis. Cysteine 117 is modified (2-(S-cysteinyl)pyruvic acid O-phosphothioketal). UDP-N-acetyl-alpha-D-glucosamine-binding positions include 122 to 126, aspartate 305, and isoleucine 327; that span reads RPIDQ.

The protein belongs to the EPSP synthase family. MurA subfamily.

It localises to the cytoplasm. It catalyses the reaction phosphoenolpyruvate + UDP-N-acetyl-alpha-D-glucosamine = UDP-N-acetyl-3-O-(1-carboxyvinyl)-alpha-D-glucosamine + phosphate. It participates in cell wall biogenesis; peptidoglycan biosynthesis. Its function is as follows. Cell wall formation. Adds enolpyruvyl to UDP-N-acetylglucosamine. This chain is UDP-N-acetylglucosamine 1-carboxyvinyltransferase 2, found in Bacillus cereus (strain ATCC 14579 / DSM 31 / CCUG 7414 / JCM 2152 / NBRC 15305 / NCIMB 9373 / NCTC 2599 / NRRL B-3711).